Consider the following 925-residue polypeptide: Isoleucine--tRNA ligase (925 aa).

A 'HIGH' region motif is present at residues 57–67 (PYANGDIHIGH). Residue glutamate 553 coordinates L-isoleucyl-5'-AMP. Positions 594–598 (KMSKS) match the 'KMSKS' region motif. Lysine 597 is a binding site for ATP. Zn(2+) is bound by residues cysteine 889, cysteine 892, cysteine 909, and cysteine 912.

Belongs to the class-I aminoacyl-tRNA synthetase family. IleS type 1 subfamily. As to quaternary structure, monomer. Requires Zn(2+) as cofactor.

Its subcellular location is the cytoplasm. The catalysed reaction is tRNA(Ile) + L-isoleucine + ATP = L-isoleucyl-tRNA(Ile) + AMP + diphosphate. Its function is as follows. Catalyzes the attachment of isoleucine to tRNA(Ile). As IleRS can inadvertently accommodate and process structurally similar amino acids such as valine, to avoid such errors it has two additional distinct tRNA(Ile)-dependent editing activities. One activity is designated as 'pretransfer' editing and involves the hydrolysis of activated Val-AMP. The other activity is designated 'posttransfer' editing and involves deacylation of mischarged Val-tRNA(Ile). The polypeptide is Isoleucine--tRNA ligase (Brevibacillus brevis (strain 47 / JCM 6285 / NBRC 100599)).